Reading from the N-terminus, the 1252-residue chain is ABC transporter B family member 19 (1252 aa).

Residue N5 is glycosylated (N-linked (GlcNAc...) asparagine). In terms of domain architecture, ABC transmembrane type-1 1 spans 41–330 (MFVGSLGAIV…SFSNLGAFSK (290 aa)). 2 consecutive transmembrane segments (helical) span residues 42–62 (FVGS…FLLF) and 88–108 (LYFV…IACW). D136 serves as a coordination point for ATP. The next 4 membrane-spanning stretches (helical) occupy residues 163-183 (VGNF…GFVS), 187-207 (LALL…LYAY), 274-294 (CTYG…GVFI), and 308-328 (IFSA…LGAF). Positions 276 and 283 each coordinate brassinolide. The region spanning 365–601 (IEFKDVTFSY…SGAYASLIRF (237 aa)) is the ABC transporter 1 domain. ATP-binding residues include Y374, S376, G405, K406, S407, T408, and E529. N-linked (GlcNAc...) asparagine glycosylation occurs at N641. In terms of domain architecture, ABC transmembrane type-1 2 spans 687–975 (SIMGAVGSIL…TVSLAPEIIR (289 aa)). The next 2 membrane-spanning stretches (helical) occupy residues 688–708 (IMGA…AIVM) and 732–752 (FIYI…HYFF). An N-linked (GlcNAc...) asparagine glycan is attached at N758. ATP is bound at residue D780. N-linked (GlcNAc...) asparagine glycosylation is found at N785 and N814. Helical transmembrane passes span 822–842 (FIVA…TFPL), 914–934 (GFLF…ILWY), and 949–969 (VIKV…TVSL). The tract at residues 965 to 1252 (ETVSLAPEII…RLLQLQTHRI (288 aa)) is interaction with FKBP42/TWD1. Residues 1010-1246 (IEFRHVDFAY…PEGAYSRLLQ (237 aa)) form the ABC transporter 2 domain. ATP contacts are provided by Y1019, S1021, R1022, K1051, S1052, and S1053.

Belongs to the ABC transporter superfamily. ABCB family. Multidrug resistance exporter (TC 3.A.1.201) subfamily. In terms of assembly, interacts with 1-naphthylphthalamic acid (NPA), and FKBP42/TWD1. Phosphorylated by PHOT1 in phototropic seedlings, to modulates auxin export and distribution and regulates leaf and petiole curling. Ubiquitous, mostly in shoot meristems. Present in the majority of stem cells, predominantly in a non-polar manner. Accumulates in seedlings roots and hypocotyls, and in roots apices and inflorescences.

Its subcellular location is the cell membrane. It catalyses the reaction (indol-3-yl)acetate(in) + ATP + H2O = (indol-3-yl)acetate(out) + ADP + phosphate + H(+). It carries out the reaction brassinolide(in) + ATP + H2O = brassinolide(out) + ADP + phosphate + H(+). The enzyme catalyses 24-epi-brassinolide(in) + ATP + H2O = 24-epi-brassinolide(out) + ADP + phosphate + H(+). The catalysed reaction is 24-epi-castasterone(in) + ATP + H2O = 24-epi-castasterone(out) + ADP + phosphate + H(+). It catalyses the reaction castasterone(in) + ATP + H2O = castasterone(out) + ADP + phosphate + H(+). Transport capacity is stimulated by the chaperone protein FKBP42/TWD1. ATPase activity is specifically activated by bioactive brassinosteroids in a dose-dependent manner, including brassinolide (BL), 24-epiBL and 24-epicastasterone (24-epiCS). Inhibited by vanadate. Brassinosteroid exporter that, in conjunction with ABCB1, supports the accumulation of exogenous brassinosteroids (BR) in the apoplast, thus promoting BR signaling initiation involving the specific receptor BRI1 and required for plant growth and stress responses. Mediates the transport of castasterone (CSA) and brassinolide (BL) across the plasma membrane. Auxin efflux transporter that acts as a negative regulator of light signaling to promote hypocotyl elongation by mediating leaf tip to petiole auxin flux. Required for the regulation of leaf position and morphology during PHOT1-mediated blue light responses involving auxin distribution, especially in low light fluence. Together with ABCB1 and in a FKBP42/TWD1-dependent manner, supports seed development by promoting stamen elongation and, to a lesser extent, anther dehiscence and pollen maturation, probably as auxin transporters. Contributes to the connective auxin transport (CAT) that ensures communication across the shoot system, including auxin loading at axillary bud apices to influence strigolactone-mediated bud outgrowth responses and shoot branching control. Mediates the accumulation of chlorophyll and anthocyanin, as well as the expression of genes in response to light. Participates in auxin efflux and thus regulates the polar auxin basipetal transport (from auxin-producing leaves to auxin-sensitive tissues, and from root tips to root elongating zone). Involved in diverse auxin-mediated responses including gravitropism, phototropism and lateral root formation. Required for the regulation of organ bending, such as gravitropic root bending. The sequence is that of ABC transporter B family member 19 from Arabidopsis thaliana (Mouse-ear cress).